A 186-amino-acid polypeptide reads, in one-letter code: uncharacterized protein (186 aa).

The next 3 membrane-spanning stretches (helical) occupy residues 42 to 62, 80 to 100, and 131 to 151; these read ISIA…LSVL, LLFL…IGLV, and ICGI…FIVL.

The protein to U.parvum UU008, UU041 and UU042.

The protein localises to the cell membrane. This is an uncharacterized protein from Ureaplasma parvum serovar 3 (strain ATCC 700970).